Here is a 126-residue protein sequence, read N- to C-terminus: Fluoride-specific ion channel FluC (126 aa).

A run of 4 helical transmembrane segments spans residues 5 to 25, 34 to 54, 67 to 87, and 95 to 115; these read IAVICLAACVGALMRWGFALW, WGTLAVNLIGGYCIGIALAVF, LVITGFLGTLTTFSSFSGEVV, and FGLAFGTIALHLGGSLALTWA. Residues Gly74 and Thr77 each coordinate Na(+).

The protein belongs to the fluoride channel Fluc/FEX (TC 1.A.43) family.

Its subcellular location is the cell inner membrane. It carries out the reaction fluoride(in) = fluoride(out). With respect to regulation, na(+) is not transported, but it plays an essential structural role and its presence is essential for fluoride channel function. Functionally, fluoride-specific ion channel. Important for reducing fluoride concentration in the cell, thus reducing its toxicity. This chain is Fluoride-specific ion channel FluC, found in Paracidovorax citrulli (strain AAC00-1) (Acidovorax citrulli).